A 142-amino-acid chain; its full sequence is Secreted acidic protein 1B (142 aa).

Acidic residues-rich tracts occupy residues 1–47 (SDDE…DDNE) and 54–64 (TNDDVDYGDGN). A disordered region spans residues 1-74 (SDDESGDDEN…DEAREIGDHS (74 aa)). The Extracellular portion of the chain corresponds to 1-123 (SDDESGDDEN…YLRSGGSHFK (123 aa)). Positions 65-74 (DEAREIGDHS) are enriched in basic and acidic residues. A helical membrane pass occupies residues 124–141 (GQLLNITLGLGFCILFLL). Leu142 is a topological domain (cytoplasmic).

As to expression, component of the acid-insoluble and acid-soluble organic matrix of the aragonitic skeleton (at protein level).

Its subcellular location is the membrane. The chain is Secreted acidic protein 1B from Acropora millepora (Staghorn coral).